The chain runs to 794 residues: ALG-2 interacting protein X (794 aa).

A BRO1 domain is found at 1-385; it reads MLSIERKRTE…DNIEFHNQSA (385 aa). Coiled-coil stretches lie at residues 499-568 and 600-655; these read SFIR…LCKK and LNES…NLDE. The interval 695-794 is disordered; it reads GVNPHSPLTS…PPYNSNNKHY (100 aa). Residues 698 to 712 show a composition bias toward low complexity; it reads PHSPLTSPSPSLQSP. The span at 713 to 722 shows a compositional bias: polar residues; sequence VNNYPNQFSS. Composition is skewed to low complexity over residues 723 to 742 and 749 to 764; these read PQYH…YVPS and YSYN…QFGG. The segment covering 765 to 787 has biased composition (pro residues); sequence PLPPPQSFSAPPPPQSFTAPPPY.

In terms of assembly, self-associates; the interaction is calcium-independent Interacts with pefa; the interaction is calcium-dependent. Interacts with pefb; the interaction is calcium-dependent.

Its subcellular location is the cytoplasm. The protein localises to the cytoplasmic vesicle membrane. It is found in the endosome. Functionally, unknown. Required for development but not for cell death. This Dictyostelium discoideum (Social amoeba) protein is ALG-2 interacting protein X (alxA).